We begin with the raw amino-acid sequence, 708 residues long: ARF GTPase-activating protein GIT2 (708 aa).

The 124-residue stretch at 1–124 folds into the Arf-GAP domain; sequence MSKRLRSSDV…AFVHRLPCRE (124 aa). The C4-type zinc-finger motif lies at 11-34; the sequence is CADCNGPDPSWASVNRGTFICDEC. ANK repeat units follow at residues 132 to 161, 166 to 195, and 199 to 228; these read DLSK…QANF, KGST…DPGT, and SGKT…ELTD. The tract at residues 376–592 is disordered; it reads STQHSTESQD…SPTLPSTEDV (217 aa). Over residues 384-401 the composition is skewed to acidic residues; sequence QDNDQPDYDSVASDEDTD. Phosphoserine occurs at positions 393 and 396. A Phosphothreonine modification is found at Thr-400. Residues 407 to 438 show a composition bias toward polar residues; it reads SKANRQKLQTLQSENSSLRRQATASACQVQTG. Low complexity predominate over residues 504 to 518; sequence TSSSSLPSFPSTLSW. 3 positions are modified to phosphoserine: Ser-508, Ser-511, and Ser-519. Positions 519–532 are enriched in basic and acidic residues; the sequence is SRDESARRASRLEK. A Phosphothreonine modification is found at Thr-536. Ser-563 bears the Phosphoserine mark.

May form heterooligomers with GIT1. Directly interacts with protein Piccolo/PCLO. Interacts with PPFIA1 and PPFIA2. Interacts with ARHGEF7. Identified in a complex with ARHGEF6 and BIN2. Interacts with PAK3. Interacts with PXN/paxillin. Interacts with TGFB1I1. Forms a complex with EFNB1 and GRB4/NCK2. In terms of processing, tyrosine phosphorylated when coexpressed in cells with PTK2/FAK1 and SRC. As to expression, expressed in the brain (at protein level).

In terms of biological role, GTPase-activating protein for ADP ribosylation factor family members, including ARF1. The sequence is that of ARF GTPase-activating protein GIT2 (Git2) from Mus musculus (Mouse).